The following is a 346-amino-acid chain: MSYQVSVAVVGATGYVGVELVRLLLAHPMVKIRYLCATQSTGKLLSSSYFHISQNYISISVSSFDDIDLDKLDVVFLCLPHGASSEIVKKIHNVVKVIDLSADFRIKDPDIYKQWYGVHYCPDLIKDFVYGLTEIYYEDIQKSSFIACPGCYPTSVLIPLFPLLRLRLVKSNNIIVDAKSGVSGAGRSVKQDNLFCEVYDAIKSYKVSNHRHIPEIEQELCFAACREDINLQFVPNLIPVKRGMMSNIYLELEVGVSLTDVREALLLFYRDSFFVVVDEEKAITTRSVVGTNYCYLGIFPGRLPNTIVIISVIDNLLKGAAGQAVQNFNVMMSYEEKLALSNIPYF.

Cysteine 151 is an active-site residue.

It belongs to the NAGSA dehydrogenase family. Type 1 subfamily.

It localises to the cytoplasm. It carries out the reaction N-acetyl-L-glutamate 5-semialdehyde + phosphate + NADP(+) = N-acetyl-L-glutamyl 5-phosphate + NADPH + H(+). It functions in the pathway amino-acid biosynthesis; L-arginine biosynthesis; N(2)-acetyl-L-ornithine from L-glutamate: step 3/4. Its function is as follows. Catalyzes the NADPH-dependent reduction of N-acetyl-5-glutamyl phosphate to yield N-acetyl-L-glutamate 5-semialdehyde. This is N-acetyl-gamma-glutamyl-phosphate reductase from Ehrlichia canis (strain Jake).